The chain runs to 820 residues: Leucine--tRNA ligase (820 aa).

The 'HIGH' region signature appears at 42–52 (PYPSGDLHMGH). The 'KMSKS' region motif lies at 576–580 (KMSKS). K579 provides a ligand contact to ATP.

Belongs to the class-I aminoacyl-tRNA synthetase family.

The protein localises to the cytoplasm. It catalyses the reaction tRNA(Leu) + L-leucine + ATP = L-leucyl-tRNA(Leu) + AMP + diphosphate. In Coxiella burnetii (strain RSA 331 / Henzerling II), this protein is Leucine--tRNA ligase.